A 323-amino-acid polypeptide reads, in one-letter code: MGSRVSREDFEWVYTDQPHADRRREILAKYPEIKSLMKPDPNLIWIIIMMVLTQLGAFYIVKDLDWKWVIFGAYAFGSCINHSMTLAIHEIAHNAAFGNCKAMWNRWFGMFANLPIGIPYSISFKRYHMDHHRYLGADGVDVDIPTDFEGWFFCTAFRKFIWVILQPLFYAFRPLFINPKPITYLEVINTVAQVTFDILIYYFLGIKSLVYMLAASLLGLGLHPISGHFIAEHYMFLKGHETYSYYGPLNLLTFNVGYHNEHHDFPNIPGKSLPLVRKIAAEYYDNLPHYNSWIKVLYDFVMDDTISPYSRMKRHQKGEMVLE.

Glycine 2 is lipidated: N-myristoyl glycine. The next 2 helical transmembrane spans lie at 41-61 (PNLI…FYIV) and 68-88 (WVIF…TLAI). A Histidine box-1 motif is present at residues 89 to 93 (HEIAH). Residues 102–122 (AMWNRWFGMFANLPIGIPYSI) form a helical membrane-spanning segment. The Histidine box-2 motif lies at 128–132 (HMDHH). The next 3 helical transmembrane spans lie at 152–172 (FFCT…FYAF), 184–204 (YLEV…YYFL), and 209–229 (LVYM…SGHF). A Histidine box-3 motif is present at residues 259 to 263 (HNEHH). Serine 307 carries the phosphoserine modification.

It belongs to the fatty acid desaturase type 1 family. DEGS subfamily. Interacts with RLBP1; the interaction increases synthesis of chromophore-precursors by DEGS1. In terms of processing, myristoylation can target the enzyme to the mitochondria leading to an increase in ceramide levels. Ubiquitous.

It is found in the mitochondrion membrane. The protein resides in the endoplasmic reticulum membrane. The catalysed reaction is an N-acylsphinganine + 2 Fe(II)-[cytochrome b5] + O2 + 2 H(+) = an N-acylsphing-4-enine + 2 Fe(III)-[cytochrome b5] + 2 H2O. It catalyses the reaction all-trans-retinol = 11-cis-retinol. It carries out the reaction all-trans-retinol = 9-cis-retinol. The enzyme catalyses all-trans-retinol = 13-cis-retinol. The catalysed reaction is 11-cis-retinol = 13-cis-retinol. It catalyses the reaction 11-cis-retinol = 9-cis-retinol. Its function is as follows. Has sphingolipid-delta-4-desaturase activity. Converts D-erythro-sphinganine to D-erythro-sphingosine (E-sphing-4-enine). Catalyzes the equilibrium isomerization of retinols. This Homo sapiens (Human) protein is Sphingolipid delta(4)-desaturase DES1.